A 116-amino-acid chain; its full sequence is Alpha-amylase inhibitor 5 (116 aa).

5 disulfides stabilise this stretch: Cys4/Cys55, Cys18/Cys44, Cys27/Cys77, Cys45/Cys95, and Cys57/Cys106.

The protein belongs to the protease inhibitor I6 (cereal trypsin/alpha-amylase inhibitor) family.

The protein resides in the secreted. Its function is as follows. Alpha-amylase inhibitor. The sequence is that of Alpha-amylase inhibitor 5 from Sorghum bicolor (Sorghum).